A 270-amino-acid polypeptide reads, in one-letter code: Surfeit locus protein 4 homolog (270 aa).

The next 6 membrane-spanning stretches (helical) occupy residues 65–85 (FLAT…CGMV), 93–113 (IAVG…SILW), 115–135 (FQFL…LAEA), 178–198 (LSVW…LVVL), 206–226 (ALIL…WWTI), and 243–263 (TLSV…GVSM). A Di-lysine motif motif is present at residues 267–270 (KKKW).

It belongs to the SURF4 family.

It is found in the endoplasmic reticulum membrane. Its function is as follows. Endoplasmic reticulum cargo receptor that mediates the export of lipoproteins by recruiting cargos into COPII vesicles to facilitate their secretion. The chain is Surfeit locus protein 4 homolog from Drosophila melanogaster (Fruit fly).